A 222-amino-acid polypeptide reads, in one-letter code: MAKRSWMAKGLSASRPMTGEMGHEPLLVAFDFDGTLTVKDSFNAFLKWRAGPRWSFGVLRLTPALIAYVFDRNRGKLKAAAVRQFLKGATVAQIENDARAFAEAFAPSLLRPDAVAVWRGWRAKGAKMVIVTASPDLIVAPFARGLGADLLIGTRLRCSDDGRILGGLDGNNCRAKEKVIRLREVFGPDVRLTAAYGDTSGDTEMLAIADEKGYRIFRGKPA.

The protein is Protein CicA (cicA) of Caulobacter vibrioides (strain ATCC 19089 / CIP 103742 / CB 15) (Caulobacter crescentus).